A 364-amino-acid chain; its full sequence is UDP-N-acetylglucosamine--N-acetylmuramyl-(pentapeptide) pyrophosphoryl-undecaprenol N-acetylglucosamine transferase 1 (364 aa).

Residues 10 to 12 (TGG), N124, S195, I250, and Q295 each bind UDP-N-acetyl-alpha-D-glucosamine.

The protein belongs to the glycosyltransferase 28 family. MurG subfamily.

Its subcellular location is the cell membrane. The catalysed reaction is di-trans,octa-cis-undecaprenyl diphospho-N-acetyl-alpha-D-muramoyl-L-alanyl-D-glutamyl-meso-2,6-diaminopimeloyl-D-alanyl-D-alanine + UDP-N-acetyl-alpha-D-glucosamine = di-trans,octa-cis-undecaprenyl diphospho-[N-acetyl-alpha-D-glucosaminyl-(1-&gt;4)]-N-acetyl-alpha-D-muramoyl-L-alanyl-D-glutamyl-meso-2,6-diaminopimeloyl-D-alanyl-D-alanine + UDP + H(+). Its pathway is cell wall biogenesis; peptidoglycan biosynthesis. In terms of biological role, cell wall formation. Catalyzes the transfer of a GlcNAc subunit on undecaprenyl-pyrophosphoryl-MurNAc-pentapeptide (lipid intermediate I) to form undecaprenyl-pyrophosphoryl-MurNAc-(pentapeptide)GlcNAc (lipid intermediate II). The protein is UDP-N-acetylglucosamine--N-acetylmuramyl-(pentapeptide) pyrophosphoryl-undecaprenol N-acetylglucosamine transferase 1 of Bacillus cereus (strain ATCC 14579 / DSM 31 / CCUG 7414 / JCM 2152 / NBRC 15305 / NCIMB 9373 / NCTC 2599 / NRRL B-3711).